A 253-amino-acid chain; its full sequence is Acidic 26 kDa endochitinase (253 aa).

Residues 1–24 (MKFNIVSPVALSCLFFLFLTGTLA) form the signal peptide. The active-site Proton donor is E92. A disulfide bridge connects residues C212 and C244.

The protein belongs to the glycosyl hydrolase 19 family. Chitinase class II subfamily.

The protein resides in the secreted. The protein localises to the extracellular space. It carries out the reaction Random endo-hydrolysis of N-acetyl-beta-D-glucosaminide (1-&gt;4)-beta-linkages in chitin and chitodextrins.. In terms of biological role, defense against chitin-containing fungal pathogens. The chain is Acidic 26 kDa endochitinase (CHI3) from Solanum lycopersicum (Tomato).